The chain runs to 328 residues: tRNA dimethylallyltransferase (328 aa).

Position 19–26 (19–26) interacts with ATP; the sequence is GPTASGKT. 21–26 contacts substrate; that stretch reads TASGKT. 3 interaction with substrate tRNA regions span residues 50–53, 174–178, and 257–262; these read DSAL, QRIQR, and RCVGYR.

Belongs to the IPP transferase family. In terms of assembly, monomer. It depends on Mg(2+) as a cofactor.

The catalysed reaction is adenosine(37) in tRNA + dimethylallyl diphosphate = N(6)-dimethylallyladenosine(37) in tRNA + diphosphate. In terms of biological role, catalyzes the transfer of a dimethylallyl group onto the adenine at position 37 in tRNAs that read codons beginning with uridine, leading to the formation of N6-(dimethylallyl)adenosine (i(6)A). The polypeptide is tRNA dimethylallyltransferase (Leptothrix cholodnii (strain ATCC 51168 / LMG 8142 / SP-6) (Leptothrix discophora (strain SP-6))).